The chain runs to 267 residues: Phosphate import ATP-binding protein PstB 1 (267 aa).

An ABC transporter domain is found at 21–262 (LETKDLHVYY…AALQSTSDYV (242 aa)). 53–60 (GPSGCGKS) is an ATP binding site.

Belongs to the ABC transporter superfamily. Phosphate importer (TC 3.A.1.7) family. In terms of assembly, the complex is composed of two ATP-binding proteins (PstB), two transmembrane proteins (PstC and PstA) and a solute-binding protein (PstS).

It is found in the cell membrane. The enzyme catalyses phosphate(out) + ATP + H2O = ADP + 2 phosphate(in) + H(+). In terms of biological role, part of the ABC transporter complex PstSACB involved in phosphate import. Responsible for energy coupling to the transport system. This chain is Phosphate import ATP-binding protein PstB 1, found in Streptococcus thermophilus (strain CNRZ 1066).